The primary structure comprises 1126 residues: DNA-directed RNA polymerase subunit Rpo2 (1126 aa).

Positions 1060, 1063, 1078, and 1081 each coordinate Zn(2+).

The protein belongs to the RNA polymerase beta chain family. As to quaternary structure, part of the 13-subunit RNA polymerase complex. Interacts with TFS4. In terms of assembly, (Microbial infection) Binds viral protein RIP which blocks global transcription. The cofactor is Zn(2+).

The protein resides in the cytoplasm. It catalyses the reaction RNA(n) + a ribonucleoside 5'-triphosphate = RNA(n+1) + diphosphate. Its function is as follows. DNA-dependent RNA polymerase (RNAP) catalyzes the transcription of DNA into RNA using the four ribonucleoside triphosphates as substrates. This subunit is involved in DNA promoter recognition. This Sulfolobus acidocaldarius (strain ATCC 33909 / DSM 639 / JCM 8929 / NBRC 15157 / NCIMB 11770) protein is DNA-directed RNA polymerase subunit Rpo2.